Here is a 249-residue protein sequence, read N- to C-terminus: Aquaporin SIP2-1 (249 aa).

2 helical membrane passes run 12–32 (PWLVVGDLALAAAWVCAGALV) and 53–73 (VSLSLVYMFLFAWLEAASGGA). The short motif at 76 to 78 (NPL) is the NPA 1 element. The next 4 membrane-spanning stretches (helical) occupy residues 104–124 (AQVIGAVLGVKLIQVTFPNVG), 133–155 (AHHGALAEGLATFMVVMVSVTLK), 176–196 (IHLLSSDITGGIMNPASAFAW), and 210–230 (LVYWLAPLQATLLGVWAVTFF). The short motif at 189-191 (NPA) is the NPA 2 element.

It belongs to the MIP/aquaporin (TC 1.A.8) family. SIP (TC 1.A.8.10) subfamily.

It localises to the membrane. In terms of biological role, aquaporins facilitate the transport of water and small neutral solutes across cell membranes. The protein is Aquaporin SIP2-1 (SIP2-1) of Zea mays (Maize).